Reading from the N-terminus, the 1546-residue chain is Mediator of RNA polymerase II transcription subunit 14 (1546 aa).

2 short sequence motifs (LXXLL motif) span residues 51–55 (LAELL) and 468–472 (LPSLL). 3 disordered regions span residues 692–717 (KSAT…PSGS), 1000–1193 (GRAP…NRPW), and 1512–1546 (NPMM…GGPQ). 3 stretches are compositionally biased toward low complexity: residues 693–717 (SATA…PSGS), 1020–1035 (GGPS…GSSP), and 1061–1075 (PSSS…PHPS). Pro residues predominate over residues 1093-1102 (PPAPHMPHPS). The span at 1125-1149 (GPNTLYMQSHQDSPFTAMSPANNQW) shows a compositional bias: polar residues. Positions 1153-1163 (PSMPRPSPRPG) are enriched in pro residues. The span at 1515-1527 (MPMQQLQPQVGPQ) shows a compositional bias: low complexity.

Belongs to the Mediator complex subunit 14 family. In terms of assembly, component of the Mediator complex.

Its subcellular location is the nucleus. Component of the Mediator complex, a coactivator involved in the regulated transcription of nearly all RNA polymerase II-dependent genes. Mediator functions as a bridge to convey information from gene-specific regulatory proteins to the basal RNA polymerase II transcription machinery. Mediator is recruited to promoters by direct interactions with regulatory proteins and serves as a scaffold for the assembly of a functional preinitiation complex with RNA polymerase II and the general transcription factors. This chain is Mediator of RNA polymerase II transcription subunit 14 (MED14), found in Drosophila pseudoobscura pseudoobscura (Fruit fly).